Here is a 150-residue protein sequence, read N- to C-terminus: Peptide deformylase 2 (150 aa).

Fe cation contacts are provided by cysteine 89 and histidine 131. Glutamate 132 is a catalytic residue. Histidine 135 contributes to the Fe cation binding site.

Belongs to the polypeptide deformylase family. The cofactor is Fe(2+).

The enzyme catalyses N-terminal N-formyl-L-methionyl-[peptide] + H2O = N-terminal L-methionyl-[peptide] + formate. Functionally, removes the formyl group from the N-terminal Met of newly synthesized proteins. Requires at least a dipeptide for an efficient rate of reaction. N-terminal L-methionine is a prerequisite for activity but the enzyme has broad specificity at other positions. This is Peptide deformylase 2 from Clostridium acetobutylicum (strain ATCC 824 / DSM 792 / JCM 1419 / IAM 19013 / LMG 5710 / NBRC 13948 / NRRL B-527 / VKM B-1787 / 2291 / W).